Consider the following 347-residue polypeptide: Protein RecA (347 aa).

66–73 provides a ligand contact to ATP; it reads GPESSGKT. The interval 328 to 347 is disordered; it reads MPKPNAPKATDEALDETGTD.

It belongs to the RecA family.

The protein localises to the cytoplasm. Can catalyze the hydrolysis of ATP in the presence of single-stranded DNA, the ATP-dependent uptake of single-stranded DNA by duplex DNA, and the ATP-dependent hybridization of homologous single-stranded DNAs. It interacts with LexA causing its activation and leading to its autocatalytic cleavage. This Hydrogenovibrio crunogenus (strain DSM 25203 / XCL-2) (Thiomicrospira crunogena) protein is Protein RecA.